The following is a 413-amino-acid chain: 1-deoxy-D-xylulose 5-phosphate reductoisomerase (413 aa).

Residues Thr-28, Gly-29, Ser-30, Ile-31, Gly-54, Arg-55, Asn-56, and Asn-142 each coordinate NADPH. Residue Lys-143 coordinates 1-deoxy-D-xylulose 5-phosphate. Glu-144 is an NADPH binding site. Mn(2+) is bound at residue Asp-168. 4 residues coordinate 1-deoxy-D-xylulose 5-phosphate: Ser-169, Glu-170, Ser-194, and His-217. Position 170 (Glu-170) interacts with Mn(2+). Gly-223 serves as a coordination point for NADPH. 1-deoxy-D-xylulose 5-phosphate contacts are provided by Ser-230, Asn-235, Lys-236, and Glu-239. Mn(2+) is bound at residue Glu-239.

This sequence belongs to the DXR family. It depends on Mg(2+) as a cofactor. Mn(2+) is required as a cofactor.

The enzyme catalyses 2-C-methyl-D-erythritol 4-phosphate + NADP(+) = 1-deoxy-D-xylulose 5-phosphate + NADPH + H(+). The protein operates within isoprenoid biosynthesis; isopentenyl diphosphate biosynthesis via DXP pathway; isopentenyl diphosphate from 1-deoxy-D-xylulose 5-phosphate: step 1/6. Its function is as follows. Catalyzes the NADPH-dependent rearrangement and reduction of 1-deoxy-D-xylulose-5-phosphate (DXP) to 2-C-methyl-D-erythritol 4-phosphate (MEP). This Thermosynechococcus vestitus (strain NIES-2133 / IAM M-273 / BP-1) protein is 1-deoxy-D-xylulose 5-phosphate reductoisomerase.